A 170-amino-acid polypeptide reads, in one-letter code: MNLKDYIATIENYPKEGITFRDISPLMADGNAYSYAVREIVQYATDKKVDMIVGPEARGFIVGCPVAFELGIGFAPVRKPGKLPREVISADYEKEYGVDTLTMHADAIKPGQRVLIVDDLLATGGTVKATIEMIEKLGGVMAGCAFLVELDELNGREKIGDYDYKVLMHY.

This sequence belongs to the purine/pyrimidine phosphoribosyltransferase family. Homodimer.

It localises to the cytoplasm. The catalysed reaction is AMP + diphosphate = 5-phospho-alpha-D-ribose 1-diphosphate + adenine. It participates in purine metabolism; AMP biosynthesis via salvage pathway; AMP from adenine: step 1/1. Its function is as follows. Catalyzes a salvage reaction resulting in the formation of AMP, that is energically less costly than de novo synthesis. The sequence is that of Adenine phosphoribosyltransferase from Streptococcus pneumoniae (strain Hungary19A-6).